We begin with the raw amino-acid sequence, 98 residues long: Co-chaperonin GroES (98 aa).

It belongs to the GroES chaperonin family. As to quaternary structure, heptamer of 7 subunits arranged in a ring. Interacts with the chaperonin GroEL.

The protein localises to the cytoplasm. Its function is as follows. Together with the chaperonin GroEL, plays an essential role in assisting protein folding. The GroEL-GroES system forms a nano-cage that allows encapsulation of the non-native substrate proteins and provides a physical environment optimized to promote and accelerate protein folding. GroES binds to the apical surface of the GroEL ring, thereby capping the opening of the GroEL channel. The chain is Co-chaperonin GroES from Rhizobium leguminosarum bv. trifolii (strain WSM2304).